A 400-amino-acid chain; its full sequence is Sensory histidine kinase/phosphatase NtrB (400 aa).

2 stretches are compositionally biased toward low complexity: residues 1–10 (MARASAAAPL) and 18–27 (RAPSSSYRPV). A disordered region spans residues 1-27 (MARASAAAPLPRRPARPRAPSSSYRPV). Positions 29 to 99 (PCIDPSVMLN…IEQVQQGRHR (71 aa)) constitute a PAS domain. The Histidine kinase domain occupies 163–381 (MLGHEVKNPL…VFKVSLPMFD (219 aa)). His-166 bears the Phosphohistidine; by autocatalysis mark.

In terms of processing, autophosphorylated.

It is found in the cytoplasm. It carries out the reaction ATP + protein L-histidine = ADP + protein N-phospho-L-histidine.. Functionally, member of the two-component regulatory system NtrB/NtrC, which controls expression of the nitrogen-regulated (ntr) genes in response to nitrogen limitation. Under conditions of nitrogen limitation, NtrB autophosphorylates and transfers the phosphoryl group to NtrC. In the presence of nitrogen, acts as a phosphatase that dephosphorylates and inactivates NtrC. The polypeptide is Sensory histidine kinase/phosphatase NtrB (Azospirillum brasilense).